The primary structure comprises 337 residues: Anthranilate phosphoribosyltransferase (337 aa).

Residues glycine 81, 84-85 (GD), serine 89, 91-94 (NVST), 109-117 (KHGNRAATS), and alanine 121 contribute to the 5-phospho-alpha-D-ribose 1-diphosphate site. Glycine 81 is a binding site for anthranilate. A Mg(2+)-binding site is contributed by serine 93. Asparagine 112 contributes to the anthranilate binding site. Residue arginine 167 coordinates anthranilate. Mg(2+) is bound by residues aspartate 226 and glutamate 227.

This sequence belongs to the anthranilate phosphoribosyltransferase family. As to quaternary structure, homodimer. Mg(2+) is required as a cofactor.

It carries out the reaction N-(5-phospho-beta-D-ribosyl)anthranilate + diphosphate = 5-phospho-alpha-D-ribose 1-diphosphate + anthranilate. It participates in amino-acid biosynthesis; L-tryptophan biosynthesis; L-tryptophan from chorismate: step 2/5. Its function is as follows. Catalyzes the transfer of the phosphoribosyl group of 5-phosphorylribose-1-pyrophosphate (PRPP) to anthranilate to yield N-(5'-phosphoribosyl)-anthranilate (PRA). The polypeptide is Anthranilate phosphoribosyltransferase (Methylorubrum extorquens (strain PA1) (Methylobacterium extorquens)).